A 233-amino-acid chain; its full sequence is Mediator of RNA polymerase II transcription subunit 8 (233 aa).

The disordered stretch occupies residues 204–233 (RGEVDRGSSSQEGLSTNNEQSGDKDIIMAD). Residues 210–223 (GSSSQEGLSTNNEQ) show a composition bias toward polar residues. Residues 224 to 233 (SGDKDIIMAD) show a composition bias toward basic and acidic residues.

Belongs to the Mediator complex subunit 8 family. As to quaternary structure, component of the Mediator complex.

It is found in the nucleus. Component of the Mediator complex, a coactivator involved in the regulated transcription of nearly all RNA polymerase II-dependent genes. Mediator functions as a bridge to convey information from gene-specific regulatory proteins to the basal RNA polymerase II transcription machinery. Mediator is recruited to promoters by direct interactions with regulatory proteins and serves as a scaffold for the assembly of a functional preinitiation complex with RNA polymerase II and the general transcription factors. The polypeptide is Mediator of RNA polymerase II transcription subunit 8 (MED8) (Candida glabrata (strain ATCC 2001 / BCRC 20586 / JCM 3761 / NBRC 0622 / NRRL Y-65 / CBS 138) (Yeast)).